The following is a 155-amino-acid chain: DNA gyrase inhibitor (155 aa).

The protein belongs to the DNA gyrase inhibitor family. As to quaternary structure, interacts with DNA gyrase.

The protein localises to the cytoplasm. Inhibits the supercoiling activity of DNA gyrase. Acts by inhibiting DNA gyrase at an early step, prior to (or at the step of) binding of DNA by the gyrase. It protects cells against toxins that target DNA gyrase, by inhibiting activity of these toxins and reducing the formation of lethal double-strand breaks in the cell. The chain is DNA gyrase inhibitor from Salmonella arizonae (strain ATCC BAA-731 / CDC346-86 / RSK2980).